We begin with the raw amino-acid sequence, 64 residues long: DNA-directed RNA polymerase subunit Rpo10 (64 aa).

Residues Cys7, Cys10, Cys45, and Cys46 each contribute to the Zn(2+) site.

It belongs to the archaeal Rpo10/eukaryotic RPB10 RNA polymerase subunit family. In terms of assembly, part of the RNA polymerase complex. Zn(2+) serves as cofactor.

It is found in the cytoplasm. The catalysed reaction is RNA(n) + a ribonucleoside 5'-triphosphate = RNA(n+1) + diphosphate. DNA-dependent RNA polymerase (RNAP) catalyzes the transcription of DNA into RNA using the four ribonucleoside triphosphates as substrates. The sequence is that of DNA-directed RNA polymerase subunit Rpo10 from Halorubrum lacusprofundi (strain ATCC 49239 / DSM 5036 / JCM 8891 / ACAM 34).